Consider the following 204-residue polypeptide: High frequency lysogenization protein HflD homolog (204 aa).

It belongs to the HflD family.

The protein resides in the cytoplasm. Its subcellular location is the cell inner membrane. This is High frequency lysogenization protein HflD homolog from Actinobacillus succinogenes (strain ATCC 55618 / DSM 22257 / CCUG 43843 / 130Z).